We begin with the raw amino-acid sequence, 137 residues long: Nucleoside diphosphate kinase (137 aa).

Positions 9, 57, 85, 91, 102, and 112 each coordinate ATP. Catalysis depends on His-115, which acts as the Pros-phosphohistidine intermediate.

It belongs to the NDK family. As to quaternary structure, homotetramer. Mg(2+) serves as cofactor.

The protein localises to the cytoplasm. The catalysed reaction is a 2'-deoxyribonucleoside 5'-diphosphate + ATP = a 2'-deoxyribonucleoside 5'-triphosphate + ADP. It catalyses the reaction a ribonucleoside 5'-diphosphate + ATP = a ribonucleoside 5'-triphosphate + ADP. Functionally, major role in the synthesis of nucleoside triphosphates other than ATP. The ATP gamma phosphate is transferred to the NDP beta phosphate via a ping-pong mechanism, using a phosphorylated active-site intermediate. The chain is Nucleoside diphosphate kinase from Geotalea daltonii (strain DSM 22248 / JCM 15807 / FRC-32) (Geobacter daltonii).